The sequence spans 257 residues: Uxu operon transcriptional regulator (257 aa).

The 69-residue stretch at 8–76 folds into the HTH gntR-type domain; that stretch reads QRPYQEVGAM…RGAGIYVLDN (69 aa). A DNA-binding region (H-T-H motif) is located at residues 36-55; sequence EREIAEMLDVTRTVVREALI.

Functionally, repressor for the uxuRBA operon. The chain is Uxu operon transcriptional regulator (uxuR) from Escherichia coli (strain K12).